We begin with the raw amino-acid sequence, 746 residues long: Polyribonucleotide nucleotidyltransferase (746 aa).

Mg(2+) contacts are provided by Asp-520 and Asp-526. In terms of domain architecture, KH spans 586–648 (PRIITVKVPV…EAARAAVNAI (63 aa)). Residues 657–729 (GERYLGTVVK…PRGKLSLVPV (73 aa)) enclose the S1 motif domain.

This sequence belongs to the polyribonucleotide nucleotidyltransferase family. The cofactor is Mg(2+).

It localises to the cytoplasm. It catalyses the reaction RNA(n+1) + phosphate = RNA(n) + a ribonucleoside 5'-diphosphate. Its function is as follows. Involved in mRNA degradation. Catalyzes the phosphorolysis of single-stranded polyribonucleotides processively in the 3'- to 5'-direction. The sequence is that of Polyribonucleotide nucleotidyltransferase from Kineococcus radiotolerans (strain ATCC BAA-149 / DSM 14245 / SRS30216).